Consider the following 495-residue polypeptide: Glutamyl-tRNA(Gln) amidotransferase subunit A (495 aa).

Catalysis depends on charge relay system residues lysine 78 and serine 158. Serine 182 serves as the catalytic Acyl-ester intermediate.

Belongs to the amidase family. GatA subfamily. As to quaternary structure, heterotrimer of A, B and C subunits.

It catalyses the reaction L-glutamyl-tRNA(Gln) + L-glutamine + ATP + H2O = L-glutaminyl-tRNA(Gln) + L-glutamate + ADP + phosphate + H(+). Its function is as follows. Allows the formation of correctly charged Gln-tRNA(Gln) through the transamidation of misacylated Glu-tRNA(Gln) in organisms which lack glutaminyl-tRNA synthetase. The reaction takes place in the presence of glutamine and ATP through an activated gamma-phospho-Glu-tRNA(Gln). The chain is Glutamyl-tRNA(Gln) amidotransferase subunit A from Ruegeria sp. (strain TM1040) (Silicibacter sp.).